The chain runs to 823 residues: Protein phosphatase 1 regulatory subunit 29 (823 aa).

The signal sequence occupies residues 1 to 22 (MLRLGLCAAALLCVCQPGAVRA). The Extracellular portion of the chain corresponds to 23–397 (DCWLIEGDKG…APSTSTTTHY (375 aa)). An N-linked (GlcNAc...) asparagine glycan is attached at N54. LRR repeat units follow at residues 56 to 77 (TVHD…SLNR), 80 to 101 (NLTD…AFLG), 104 to 125 (SLQV…MLRG), 128 to 149 (RLQF…AFSE), and 152 to 173 (SLIS…TFAS). 3 N-linked (GlcNAc...) asparagine glycosylation sites follow: N80, N85, and N117. The LRRCT domain maps to 185 to 247 (NPFNCECDLF…ITVLQAKCRN (63 aa)). N205 and N247 each carry an N-linked (GlcNAc...) asparagine glycan. Positions 249–294 (SMPARPVSHPTPYSTDAQREPDENSGFNPDEILSVEPPASSTTDAS) are disordered. The region spanning 292–379 (DASAGPAIKL…FNHTCLTFTT (88 aa)) is the Fibronectin type-III domain. Residues 398-418 (IMTILGCLFGMVIVLGAVYYC) form a helical membrane-spanning segment. Topologically, residues 419–823 (LRKRRMQEEK…WKGVSAQQKL (405 aa)) are cytoplasmic. The disordered stretch occupies residues 590-624 (ASSAATPGALERPSFLSPPYKESSHHPLQRQLSAD). 3 positions are modified to phosphoserine: S622, S671, and S675.

Interacts with PPP1CA.

Its subcellular location is the membrane. Its function is as follows. Inhibits phosphatase activity of protein phosphatase 1 (PP1) complexes. The protein is Protein phosphatase 1 regulatory subunit 29 (Elfn2) of Mus musculus (Mouse).